Here is a 1085-residue protein sequence, read N- to C-terminus: KN motif and ankyrin repeat domain-containing protein 2 (1085 aa).

The segment covering 136-145 (KLEEEKDGRR) has biased composition (basic and acidic residues). The interval 136–192 (KLEEEKDGRRFSNLGSMHSSMAGSNTSLSSAHSFNRAQGGGSYTPMSSGLSTPVSPT) is disordered. 2 stretches are compositionally biased toward polar residues: residues 148–171 (NLGS…SFNR) and 179–189 (TPMSSGLSTPV). Positions 196 to 216 (LQHVREQMAVALRKIRELEEQ) form a coiled coil. A disordered region spans residues 273-295 (NGAGAANKATGSLSPTTPGSLQD). The span at 281–295 (ATGSLSPTTPGSLQD) shows a compositional bias: polar residues. Positions 356-383 (VGLLEVQLRKTMQELQSAQQQVEAAQKE) form a coiled coil. Disordered regions lie at residues 557 to 736 (RKAD…SNVQ), 752 to 791 (TTTQ…SAKQ), and 798 to 817 (TTKP…TDSL). Positions 589–600 (SSSESSEDESDA) are enriched in acidic residues. Residues 601 to 611 (SEYHEATEKLP) are compositionally biased toward basic and acidic residues. Positions 614–648 (ATPQSLVSSCIPQLASETPATQTAQHSTAQIPTNH) are enriched in polar residues. Residues 649 to 668 (TPAAQTTSQSHTTDATTQQH) are compositionally biased toward low complexity. 2 stretches are compositionally biased toward polar residues: residues 706–736 (NPPS…SNVQ) and 760–788 (SAKP…TDGS). Over residues 798-810 (TTKPAADTATPPT) the composition is skewed to low complexity. ANK repeat units follow at residues 895-925 (NGNT…NADK), 929-962 (AGYT…DVNA), 967-996 (AGQT…QVNL), 1000-1030 (DGST…DATL), and 1034-1063 (DGST…FAKP). A disordered region spans residues 1064–1085 (PSPVSPKSPILGSSPPSSSELK). Residues 1070–1085 (KSPILGSSPPSSSELK) show a composition bias toward low complexity.

The protein localises to the cytoplasm. It is found in the mitochondrion. In terms of biological role, may be involved in different biological processes including transcription and apoptosis by sequestering specific proteins outside of the nucleus. Involved in actin stress fibers formation probably through its interaction with ARHGDIA and the regulation of the Rho signaling pathway. May thereby play a role in cell adhesion and migration, regulating for instance podocytes migration during development of the kidney. The chain is KN motif and ankyrin repeat domain-containing protein 2 (kank2) from Danio rerio (Zebrafish).